Consider the following 138-residue polypeptide: Small ribosomal subunit protein uS11c (138 aa).

Residues 1 to 24 form a disordered region; sequence MAKSPPRSGSRRPGRIGSRKSGRR. A compositionally biased stretch (basic residues) spans 9–24; sequence GSRRPGRIGSRKSGRR.

It belongs to the universal ribosomal protein uS11 family. As to quaternary structure, part of the 30S ribosomal subunit.

The protein localises to the plastid. It localises to the chloroplast. The protein is Small ribosomal subunit protein uS11c of Citrus sinensis (Sweet orange).